Here is a 756-residue protein sequence, read N- to C-terminus: 3-O-alpha-D-glucosyl-L-rhamnose phosphorylase (756 aa).

Residue 358-359 (WD) coordinates substrate. Residue glutamate 486 is the Proton donor of the active site. 590–591 (KQ) lines the substrate pocket.

Belongs to the glycosyl hydrolase 65 family. Monomer.

It localises to the cytoplasm. It catalyses the reaction 3-O-alpha-D-glucosyl-L-rhamnose + phosphate = beta-D-glucose 1-phosphate + L-rhamnopyranose. In terms of biological role, phosphorylase showing strict alpha-1,3-regioselectivity and producing 3-O-alpha-D-glucopyranosyl-L-rhamnopyranose. Specific for L-rhamnose as acceptor and beta-D-glucose 1-phosphate as donor. Does not phosphorylate alpha,alpha-trehalose, kojibiose, nigerose, or maltose. This is 3-O-alpha-D-glucosyl-L-rhamnose phosphorylase from Lachnoclostridium phytofermentans (strain ATCC 700394 / DSM 18823 / ISDg) (Clostridium phytofermentans).